Here is a 239-residue protein sequence, read N- to C-terminus: Tetraspanin-9 (239 aa).

The Cytoplasmic segment spans residues 1 to 12; the sequence is MARGCLCCVKYM. Residues 13–33 traverse the membrane as a helical segment; it reads LFLFNLLFWLGGCGLLGVGVW. Residues 34–55 are Extracellular-facing; the sequence is LSVSQGSFATLSPSFPSISAAN. A helical transmembrane segment spans residues 56–76; the sequence is LIITLGAVIMVTGFLGCLGAI. The Cytoplasmic portion of the chain corresponds to 77–85; that stretch reads KENKCLLLS. A helical transmembrane segment spans residues 86–106; sequence FFITLLVILLAELILLILFFV. Over 107–203 the chain is Extracellular; sequence YTDNVSENAR…VEEWLDDNKH (97 aa). Asparagine 110 and asparagine 180 each carry an N-linked (GlcNAc...) asparagine glycan. A helical membrane pass occupies residues 204-224; sequence LLGTIAMCVLVIQLLGMAFSM. The Cytoplasmic portion of the chain corresponds to 225–239; that stretch reads TLYQQIHRSGKKYEA.

The protein belongs to the tetraspanin (TM4SF) family.

The protein localises to the membrane. The sequence is that of Tetraspanin-9 (tspan9) from Salmo salar (Atlantic salmon).